Reading from the N-terminus, the 139-residue chain is Protein Turandot B (139 aa).

The signal sequence occupies residues 1–21 (MNFKTALICFALLLIGTLCSA).

It belongs to the Turandot family.

It localises to the secreted. Functionally, a humoral factor that may play a role in stress tolerance. The polypeptide is Protein Turandot B (Drosophila sechellia (Fruit fly)).